Reading from the N-terminus, the 1353-residue chain is Tenascin-R (1353 aa).

An N-terminal signal peptide occupies residues 1–33 (MGTDSENPVLRNVLISFNLLLLGAVLKPFECRL). A coiled-coil region spans residues 132–156 (SLQELLSRIEMLEREVSMLRDQCNS). N-linked (GlcNAc...) asparagine glycosylation is found at Asn-179 and Asn-197. EGF-like domains follow at residues 187–198 (CICSEGWAGSNC), 234–260 (CPAG…GEDC), 265–291 (CPRD…GEDC), and 292–323 (GWLR…QDCS). Asn-277 is a glycosylation site (N-linked (GlcNAc...) asparagine). Disulfide bonds link Cys-296-Cys-306 and Cys-313-Cys-322. Fibronectin type-III domains follow at residues 327-419 (PPEN…TPQG), 420-504 (LKFK…TLID), 505-594 (GPTQ…TEID), 595-686 (APKN…TELD), 687-776 (SPRD…VRPI), 777-863 (TQLH…TGMD), 864-952 (APKD…AMDA), 953-1037 (PLGV…TLLD), and 1038-1126 (PPTN…GGRV). 3 N-linked (GlcNAc...) asparagine glycosylation sites follow: Asn-391, Asn-469, and Asn-580. N-linked (GlcNAc...) asparagine glycosylation is found at Asn-734, Asn-790, Asn-872, Asn-1031, Asn-1041, Asn-1256, and Asn-1342. A Fibrinogen C-terminal domain is found at 1124–1339 (GRVFANPQDC…FVEMKMRPYN (216 aa)).

The protein belongs to the tenascin family. In terms of assembly, forms homodimers and homotrimers. Interacts with CNTN1, NFASC and CSPG5. As to expression, brain specific.

Its subcellular location is the secreted. It localises to the extracellular space. The protein localises to the extracellular matrix. Neural extracellular matrix (ECM) protein involved in interactions with different cells and matrix components. Involved in cell attachment and neurite formation. Interaction with CNTN1 enhances the neurite outgrowth. The polypeptide is Tenascin-R (TNR) (Gallus gallus (Chicken)).